The chain runs to 558 residues: Dihydroxy-acid dehydratase (558 aa).

D78 is a Mg(2+) binding site. C119 is a [2Fe-2S] cluster binding site. 2 residues coordinate Mg(2+): D120 and K121. Residue K121 is modified to N6-carboxylysine. A [2Fe-2S] cluster-binding site is contributed by C191. E443 contacts Mg(2+). Catalysis depends on S469, which acts as the Proton acceptor.

This sequence belongs to the IlvD/Edd family. Homodimer. Requires [2Fe-2S] cluster as cofactor. Mg(2+) serves as cofactor.

The catalysed reaction is (2R)-2,3-dihydroxy-3-methylbutanoate = 3-methyl-2-oxobutanoate + H2O. It catalyses the reaction (2R,3R)-2,3-dihydroxy-3-methylpentanoate = (S)-3-methyl-2-oxopentanoate + H2O. The protein operates within amino-acid biosynthesis; L-isoleucine biosynthesis; L-isoleucine from 2-oxobutanoate: step 3/4. It participates in amino-acid biosynthesis; L-valine biosynthesis; L-valine from pyruvate: step 3/4. Its function is as follows. Functions in the biosynthesis of branched-chain amino acids. Catalyzes the dehydration of (2R,3R)-2,3-dihydroxy-3-methylpentanoate (2,3-dihydroxy-3-methylvalerate) into 2-oxo-3-methylpentanoate (2-oxo-3-methylvalerate) and of (2R)-2,3-dihydroxy-3-methylbutanoate (2,3-dihydroxyisovalerate) into 2-oxo-3-methylbutanoate (2-oxoisovalerate), the penultimate precursor to L-isoleucine and L-valine, respectively. The chain is Dihydroxy-acid dehydratase from Solidesulfovibrio magneticus (strain ATCC 700980 / DSM 13731 / RS-1) (Desulfovibrio magneticus).